The sequence spans 402 residues: Protein indeterminate-domain 12 (402 aa).

Positions 47–66 (TETHKPKKKRGLPGNPDPDA) are disordered. S72 is subject to Phosphoserine. 2 consecutive C2H2-type zinc fingers follow at residues 82 to 104 (FVCE…RRGH) and 124 to 154 (YVCP…CRKH). A Nuclear localization signal motif is present at residues 146-153 (IKKHFCRK). A C2H2-type 2; degenerate zinc finger spans residues 159–183 (WKCEKCSKFYAVQSDWKAHTKICGT). Residues C161, C164, H177, C181, C188, C190, H203, and C207 each coordinate Zn(2+). The segment at 186–209 (YRCDCGTLFSRKDTFITHRAFCDA) adopts a CCHC-type 2; atypical zinc-finger fold. The segment at 196-208 (RKDTFITHRAFCD) is SHR-binding.

It is found in the nucleus. Functionally, probable transcription factor. The chain is Protein indeterminate-domain 12 from Arabidopsis thaliana (Mouse-ear cress).